A 313-amino-acid chain; its full sequence is UPF0761 membrane protein VV1_0885 (313 aa).

Helical transmembrane passes span 41–61 (YLAY…LSIL), 104–124 (MTAV…SNID), 139–159 (AVFS…LVGA), 185–205 (LLRW…YLLV), 215–235 (AVVG…GFAA), and 249–269 (ALAA…IVLI). Residues 294 to 313 (PNNDTELEKDTQRDRFDSES) are disordered. Residues 299-313 (ELEKDTQRDRFDSES) are compositionally biased toward basic and acidic residues.

It belongs to the UPF0761 family.

It is found in the cell inner membrane. This Vibrio vulnificus (strain CMCP6) protein is UPF0761 membrane protein VV1_0885.